The chain runs to 156 residues: Small ribosomal subunit protein uS7 (156 aa).

This sequence belongs to the universal ribosomal protein uS7 family. Part of the 30S ribosomal subunit. Contacts proteins S9 and S11.

In terms of biological role, one of the primary rRNA binding proteins, it binds directly to 16S rRNA where it nucleates assembly of the head domain of the 30S subunit. Is located at the subunit interface close to the decoding center, probably blocks exit of the E-site tRNA. The chain is Small ribosomal subunit protein uS7 from Pseudomonas fluorescens (strain SBW25).